Consider the following 122-residue polypeptide: Small ribosomal subunit protein uS13 (122 aa).

Residues 95-122 are disordered; it reads GLPVRGQRTHTNARTRKGKAKPIAGKKK.

The protein belongs to the universal ribosomal protein uS13 family. Part of the 30S ribosomal subunit. Forms a loose heterodimer with protein S19. Forms two bridges to the 50S subunit in the 70S ribosome.

Its function is as follows. Located at the top of the head of the 30S subunit, it contacts several helices of the 16S rRNA. In the 70S ribosome it contacts the 23S rRNA (bridge B1a) and protein L5 of the 50S subunit (bridge B1b), connecting the 2 subunits; these bridges are implicated in subunit movement. Contacts the tRNAs in the A and P-sites. The chain is Small ribosomal subunit protein uS13 from Zymomonas mobilis subsp. mobilis (strain ATCC 31821 / ZM4 / CP4).